The primary structure comprises 430 residues: Alpha-1,6-mannosyl-glycoprotein 2-beta-N-acetylglucosaminyltransferase (430 aa).

The Cytoplasmic segment spans residues 1-12 (MANLWKKQRLRD). A helical; Signal-anchor for type II membrane protein transmembrane segment spans residues 13–35 (TGLCRLGILFAVTLSIVLMLVSV). At 36-430 (PRTALNGSSI…YRYSSSSASP (395 aa)) the chain is on the lumenal side. N-linked (GlcNAc...) asparagine glycosylation is found at asparagine 41 and asparagine 61. Substrate contacts are provided by residues 104-108 (YVHNR) and aspartate 135. Cysteine 177 and cysteine 188 are oxidised to a cystine. 205 to 209 (SLKHH) contributes to the substrate binding site. Residue aspartate 237 coordinates Mn(2+). A disulfide bridge links cysteine 259 with cysteine 262. N-linked (GlcNAc...) asparagine glycosylation is present at asparagine 295. Cysteine 310 and cysteine 414 are oxidised to a cystine. Histidine 345 contacts Mn(2+).

This sequence belongs to the glycosyltransferase 16 (GT16) protein family. It depends on Mn(2+) as a cofactor.

It is found in the golgi apparatus membrane. It carries out the reaction an N(4)-{beta-D-GlcNAc-(1-&gt;2)-alpha-D-Man-(1-&gt;3)-[alpha-D-Man-(1-&gt;6)]-beta-D-Man-(1-&gt;4)-beta-D-GlcNAc-(1-&gt;4)-beta-D-GlcNAc}-L-asparaginyl-[protein] + UDP-N-acetyl-alpha-D-glucosamine = N(4)-{beta-D-GlcNAc-(1-&gt;2)-alpha-D-Man-(1-&gt;3)-[beta-D-GlcNAc-(1-&gt;2)-alpha-D-Man-(1-&gt;6)]-beta-D-Man-(1-&gt;4)-beta-D-GlcNAc-(1-&gt;4)-beta-D-GlcNAc}-L-asparaginyl-[protein] + UDP + H(+). It functions in the pathway protein modification; protein glycosylation. In terms of biological role, catalyzes an essential step in the conversion of oligo-mannose and hybrid to complex N-glycans. This chain is Alpha-1,6-mannosyl-glycoprotein 2-beta-N-acetylglucosaminyltransferase, found in Arabidopsis thaliana (Mouse-ear cress).